We begin with the raw amino-acid sequence, 1396 residues long: DNA-directed RNA polymerase subunit beta' (1396 aa).

The Zn(2+) site is built by Cys-72, Cys-74, Cys-87, and Cys-90. Residues Asp-463, Asp-465, and Asp-467 each contribute to the Mg(2+) site. The Zn(2+) site is built by Cys-814, Cys-889, Cys-896, and Cys-899.

The protein belongs to the RNA polymerase beta' chain family. As to quaternary structure, the RNAP catalytic core consists of 2 alpha, 1 beta, 1 beta' and 1 omega subunit. When a sigma factor is associated with the core the holoenzyme is formed, which can initiate transcription. Mg(2+) is required as a cofactor. The cofactor is Zn(2+).

It carries out the reaction RNA(n) + a ribonucleoside 5'-triphosphate = RNA(n+1) + diphosphate. Functionally, DNA-dependent RNA polymerase catalyzes the transcription of DNA into RNA using the four ribonucleoside triphosphates as substrates. The protein is DNA-directed RNA polymerase subunit beta' of Chlamydia trachomatis serovar L2b (strain UCH-1/proctitis).